We begin with the raw amino-acid sequence, 218 residues long: PKHD-type hydroxylase IL0759 (218 aa).

One can recognise a Fe2OG dioxygenase domain in the interval 76 to 170 (QVARVTINRY…RLAMIGWVQS (95 aa)). The Fe cation site is built by His94, Asp96, and His151. Arg161 is a 2-oxoglutarate binding site.

It depends on Fe(2+) as a cofactor. L-ascorbate is required as a cofactor.

In Idiomarina loihiensis (strain ATCC BAA-735 / DSM 15497 / L2-TR), this protein is PKHD-type hydroxylase IL0759.